A 193-amino-acid polypeptide reads, in one-letter code: NADH-quinone oxidoreductase subunit B (193 aa).

4 residues coordinate [4Fe-4S] cluster: cysteine 72, cysteine 73, cysteine 137, and cysteine 167.

Belongs to the complex I 20 kDa subunit family. As to quaternary structure, NDH-1 is composed of 14 different subunits. Subunits NuoB, C, D, E, F, and G constitute the peripheral sector of the complex. [4Fe-4S] cluster serves as cofactor.

It localises to the cell inner membrane. It carries out the reaction a quinone + NADH + 5 H(+)(in) = a quinol + NAD(+) + 4 H(+)(out). NDH-1 shuttles electrons from NADH, via FMN and iron-sulfur (Fe-S) centers, to quinones in the respiratory chain. Couples the redox reaction to proton translocation (for every two electrons transferred, four hydrogen ions are translocated across the cytoplasmic membrane), and thus conserves the redox energy in a proton gradient. The polypeptide is NADH-quinone oxidoreductase subunit B (Brucella abortus (strain S19)).